A 34-amino-acid polypeptide reads, in one-letter code: Photosystem II reaction center protein M (34 aa).

Residues 5 to 25 (ILAFIATALFILIPTAFLLII) traverse the membrane as a helical segment.

It belongs to the PsbM family. As to quaternary structure, PSII is composed of 1 copy each of membrane proteins PsbA, PsbB, PsbC, PsbD, PsbE, PsbF, PsbH, PsbI, PsbJ, PsbK, PsbL, PsbM, PsbT, PsbX, PsbY, PsbZ, Psb30/Ycf12, at least 3 peripheral proteins of the oxygen-evolving complex and a large number of cofactors. It forms dimeric complexes.

It is found in the plastid. The protein resides in the chloroplast thylakoid membrane. In terms of biological role, one of the components of the core complex of photosystem II (PSII). PSII is a light-driven water:plastoquinone oxidoreductase that uses light energy to abstract electrons from H(2)O, generating O(2) and a proton gradient subsequently used for ATP formation. It consists of a core antenna complex that captures photons, and an electron transfer chain that converts photonic excitation into a charge separation. This subunit is found at the monomer-monomer interface. This chain is Photosystem II reaction center protein M, found in Agrostis stolonifera (Creeping bentgrass).